We begin with the raw amino-acid sequence, 663 residues long: DNA ligase 1 (663 aa).

NAD(+)-binding positions include 28–32 (DKEYD) and 76–77 (SL). The active-site N6-AMP-lysine intermediate is the Lys-118. Residues Arg-139, Glu-173, and Lys-310 each contribute to the NAD(+) site. Zn(2+) is bound by residues Cys-403, Cys-406, Cys-419, and Cys-425. Residues 583-663 (VSESVFNDKT…KFEELIESVK (81 aa)) form the BRCT domain.

This sequence belongs to the NAD-dependent DNA ligase family. LigA subfamily. Mg(2+) serves as cofactor. Mn(2+) is required as a cofactor.

It catalyses the reaction NAD(+) + (deoxyribonucleotide)n-3'-hydroxyl + 5'-phospho-(deoxyribonucleotide)m = (deoxyribonucleotide)n+m + AMP + beta-nicotinamide D-nucleotide.. DNA ligase that catalyzes the formation of phosphodiester linkages between 5'-phosphoryl and 3'-hydroxyl groups in double-stranded DNA using NAD as a coenzyme and as the energy source for the reaction. It is essential for DNA replication and repair of damaged DNA. This Clostridium acetobutylicum (strain ATCC 824 / DSM 792 / JCM 1419 / IAM 19013 / LMG 5710 / NBRC 13948 / NRRL B-527 / VKM B-1787 / 2291 / W) protein is DNA ligase 1.